The chain runs to 336 residues: Dihydroorotate dehydrogenase (quinone) (336 aa).

FMN contacts are provided by residues Ala-62 to Lys-66 and Thr-86. Lys-66 lines the substrate pocket. Asn-111–Phe-115 is a binding site for substrate. Residues Asn-139 and Asn-172 each contribute to the FMN site. Residue Asn-172 participates in substrate binding. Ser-175 (nucleophile) is an active-site residue. Asn-177 is a substrate binding site. Residues Lys-217 and Thr-245 each contribute to the FMN site. Asn-246–Thr-247 provides a ligand contact to substrate. FMN is bound by residues Gly-268, Gly-297, and Phe-318–Ser-319.

It belongs to the dihydroorotate dehydrogenase family. Type 2 subfamily. As to quaternary structure, monomer. The cofactor is FMN.

The protein resides in the cell membrane. It catalyses the reaction (S)-dihydroorotate + a quinone = orotate + a quinol. It participates in pyrimidine metabolism; UMP biosynthesis via de novo pathway; orotate from (S)-dihydroorotate (quinone route): step 1/1. Functionally, catalyzes the conversion of dihydroorotate to orotate with quinone as electron acceptor. The polypeptide is Dihydroorotate dehydrogenase (quinone) (Photorhabdus laumondii subsp. laumondii (strain DSM 15139 / CIP 105565 / TT01) (Photorhabdus luminescens subsp. laumondii)).